Consider the following 282-residue polypeptide: Aquaporin NIP1-1 (282 aa).

A run of 2 helical transmembrane segments spans residues 46-66 and 74-94; these read IIAE…AVTI and ITFP…VYAV. Residues 103 to 105 carry the NPA 1 motif; sequence NPA. A run of 3 helical transmembrane segments spans residues 125–145, 162–182, and 186–206; these read VLAQ…MFGG, SLVI…GVAT, and AIGE…VLIA. Positions 215-217 match the NPA 2 motif; sequence NPA. The chain crosses the membrane as a helical span at residues 232 to 252; sequence IWVYVVGPVVGAVAGAWAYNL.

This sequence belongs to the MIP/aquaporin (TC 1.A.8) family. NIP (TC 1.A.8.12) subfamily.

The protein resides in the membrane. Aquaporins facilitate the transport of water and small neutral solutes across cell membranes. This chain is Aquaporin NIP1-1 (NIP1-1), found in Zea mays (Maize).